A 349-amino-acid chain; its full sequence is Phosphoribosylformylglycinamidine cyclo-ligase (349 aa).

It belongs to the AIR synthase family.

The protein resides in the cytoplasm. It carries out the reaction 2-formamido-N(1)-(5-O-phospho-beta-D-ribosyl)acetamidine + ATP = 5-amino-1-(5-phospho-beta-D-ribosyl)imidazole + ADP + phosphate + H(+). The protein operates within purine metabolism; IMP biosynthesis via de novo pathway; 5-amino-1-(5-phospho-D-ribosyl)imidazole from N(2)-formyl-N(1)-(5-phospho-D-ribosyl)glycinamide: step 2/2. This Methanococcus maripaludis (strain DSM 14266 / JCM 13030 / NBRC 101832 / S2 / LL) protein is Phosphoribosylformylglycinamidine cyclo-ligase.